The primary structure comprises 136 residues: Translation initiation factor 5A (136 aa).

Lysine 37 bears the Hypusine mark.

Belongs to the eIF-5A family.

It localises to the cytoplasm. Its function is as follows. Functions by promoting the formation of the first peptide bond. The chain is Translation initiation factor 5A (eIF5A) from Thermococcus onnurineus (strain NA1).